The chain runs to 236 residues: Phospholipid hydroperoxide glutathione peroxidase 1, chloroplastic (236 aa).

The segment covering 1 to 16 (MVSMTTSSSSYGTFST) has biased composition (low complexity). The segment at 1-24 (MVSMTTSSSSYGTFSTVVNSSRPN) is disordered. The N-terminal 64 residues, 1–64 (MVSMTTSSSS…PINPGFLFKS (64 aa)), are a transit peptide targeting the chloroplast. C111 is a catalytic residue.

The protein belongs to the glutathione peroxidase family. As to expression, expressed in leaves, stems, flowers, green siliques and seeds.

The protein resides in the plastid. It is found in the chloroplast. The catalysed reaction is a hydroperoxy polyunsaturated fatty acid + 2 glutathione = a hydroxy polyunsaturated fatty acid + glutathione disulfide + H2O. Functionally, protects cells and enzymes from oxidative damage, by catalyzing the reduction of hydrogen peroxide, lipid peroxides and organic hydroperoxide, by glutathione. This Arabidopsis thaliana (Mouse-ear cress) protein is Phospholipid hydroperoxide glutathione peroxidase 1, chloroplastic (GPX1).